Consider the following 743-residue polypeptide: GTPase-activating protein gyp7 (743 aa).

A Rab-GAP TBC domain is found at 411–633 (GIQPSLRKEV…KLWDVLFTNY (223 aa)).

The protein resides in the cytoplasm. Its subcellular location is the nucleus. In terms of biological role, most effectively accelerates the intrinsic GTPase activity of ypt7. This Schizosaccharomyces pombe (strain 972 / ATCC 24843) (Fission yeast) protein is GTPase-activating protein gyp7.